The sequence spans 492 residues: 3-octaprenyl-4-hydroxybenzoate carboxy-lyase (492 aa).

Asn177 contacts Mn(2+). Prenylated FMN-binding positions include 180 to 182, 194 to 196, and 199 to 200; these read IYR, RWL, and RG. Glu243 lines the Mn(2+) pocket. Asp292 (proton donor) is an active-site residue.

It belongs to the UbiD family. In terms of assembly, homohexamer. Prenylated FMN is required as a cofactor. It depends on Mn(2+) as a cofactor.

It is found in the cell membrane. It catalyses the reaction a 4-hydroxy-3-(all-trans-polyprenyl)benzoate + H(+) = a 2-(all-trans-polyprenyl)phenol + CO2. It functions in the pathway cofactor biosynthesis; ubiquinone biosynthesis. Functionally, catalyzes the decarboxylation of 3-octaprenyl-4-hydroxy benzoate to 2-octaprenylphenol, an intermediate step in ubiquinone biosynthesis. The protein is 3-octaprenyl-4-hydroxybenzoate carboxy-lyase of Neisseria meningitidis serogroup B (strain ATCC BAA-335 / MC58).